A 169-amino-acid polypeptide reads, in one-letter code: NADH-quinone oxidoreductase subunit B (169 aa).

[4Fe-4S] cluster contacts are provided by Cys-42, Cys-43, Cys-107, and Cys-136.

Belongs to the complex I 20 kDa subunit family. As to quaternary structure, NDH-1 is composed of 14 different subunits. Subunits NuoB, C, D, E, F, and G constitute the peripheral sector of the complex. The cofactor is [4Fe-4S] cluster.

It is found in the cell inner membrane. The catalysed reaction is a quinone + NADH + 5 H(+)(in) = a quinol + NAD(+) + 4 H(+)(out). Its function is as follows. NDH-1 shuttles electrons from NADH, via FMN and iron-sulfur (Fe-S) centers, to quinones in the respiratory chain. The immediate electron acceptor for the enzyme in this species is believed to be ubiquinone. Couples the redox reaction to proton translocation (for every two electrons transferred, four hydrogen ions are translocated across the cytoplasmic membrane), and thus conserves the redox energy in a proton gradient. The chain is NADH-quinone oxidoreductase subunit B from Nitratiruptor sp. (strain SB155-2).